A 559-amino-acid chain; its full sequence is Pentatricopeptide repeat-containing protein At2g42920, chloroplastic (559 aa).

Residues 1–14 (MSPTILSFSGVTVP) constitute a chloroplast transit peptide. PPR repeat units follow at residues 88-122 (NPFV…SPSV), 125-159 (QRLT…GLED), 160-190 (DSFI…MIGF), 191-221 (DVVA…MPQR), 222-256 (NGVS…DVKP), 257-291 (DGFT…RFEL), 292-322 (NSIV…APKK), 323-357 (QLSC…GLEP), 358-388 (DSVS…MKEK), and 394-424 (SIKH…MPVE). The interval 429 to 504 (IWSSLLSACR…EVGCSSIEVD (76 aa)) is type E motif. The interval 505-535 (FEVHEFISCGGTHPKSAEIYSLLDILNWDVS) is type E(+) motif.

Belongs to the PPR family. PCMP-E subfamily.

Its subcellular location is the plastid. The protein localises to the chloroplast. The chain is Pentatricopeptide repeat-containing protein At2g42920, chloroplastic (PCMP-E75) from Arabidopsis thaliana (Mouse-ear cress).